Here is a 182-residue protein sequence, read N- to C-terminus: Guanylate kinase (182 aa).

In terms of domain architecture, Guanylate kinase-like spans 2 to 180 (GTLTVITGPS…ALLKLEGLMG (179 aa)). Position 9-16 (9-16 (GPSGVGKG)) interacts with ATP.

Belongs to the guanylate kinase family.

It localises to the cytoplasm. It catalyses the reaction GMP + ATP = GDP + ADP. The enzyme catalyses dZMP + ATP = dZDP + ADP. The protein operates within purine metabolism. Functionally, essential for recycling GMP and indirectly, cGMP. Its function is as follows. (Microbial infection) Catalyzes the phosphorylation of dZMP to dZDP, when the bacterium is infected by a phage that produces the substrate for the synthesis of dZTP (2- amino-2'-deoxyadenosine 5'-triphosphate), which is then used by the phage as a DNA polymerase substrate. The protein is Guanylate kinase of Parasynechococcus marenigrum (strain WH8102).